The chain runs to 235 residues: tRNA1(Val) (adenine(37)-N6)-methyltransferase (235 aa).

Belongs to the methyltransferase superfamily. tRNA (adenine-N(6)-)-methyltransferase family.

The protein localises to the cytoplasm. The catalysed reaction is adenosine(37) in tRNA1(Val) + S-adenosyl-L-methionine = N(6)-methyladenosine(37) in tRNA1(Val) + S-adenosyl-L-homocysteine + H(+). Functionally, specifically methylates the adenine in position 37 of tRNA(1)(Val) (anticodon cmo5UAC). This Flavobacterium johnsoniae (strain ATCC 17061 / DSM 2064 / JCM 8514 / BCRC 14874 / CCUG 350202 / NBRC 14942 / NCIMB 11054 / UW101) (Cytophaga johnsonae) protein is tRNA1(Val) (adenine(37)-N6)-methyltransferase.